The sequence spans 553 residues: CTP synthase (553 aa).

Residues Met-1–Leu-270 form an amidoligase domain region. A CTP-binding site is contributed by Ser-13. Ser-13 lines the UTP pocket. ATP contacts are provided by residues Ser-14–Ile-19 and Asp-71. Residues Asp-71 and Glu-144 each contribute to the Mg(2+) site. CTP is bound by residues Asp-151–Glu-153, Lys-191–Gln-196, and Lys-227. UTP-binding positions include Lys-191 to Gln-196 and Lys-227. In terms of domain architecture, Glutamine amidotransferase type-1 spans Thr-295–Ala-547. Gly-356 lines the L-glutamine pocket. Residue Cys-383 is the Nucleophile; for glutamine hydrolysis of the active site. L-glutamine contacts are provided by residues Leu-384–Gln-387, Glu-407, and Arg-473. Active-site residues include His-520 and Glu-522.

The protein belongs to the CTP synthase family. Homotetramer.

It carries out the reaction UTP + L-glutamine + ATP + H2O = CTP + L-glutamate + ADP + phosphate + 2 H(+). The enzyme catalyses L-glutamine + H2O = L-glutamate + NH4(+). It catalyses the reaction UTP + NH4(+) + ATP = CTP + ADP + phosphate + 2 H(+). Its pathway is pyrimidine metabolism; CTP biosynthesis via de novo pathway; CTP from UDP: step 2/2. With respect to regulation, allosterically activated by GTP, when glutamine is the substrate; GTP has no effect on the reaction when ammonia is the substrate. The allosteric effector GTP functions by stabilizing the protein conformation that binds the tetrahedral intermediate(s) formed during glutamine hydrolysis. Inhibited by the product CTP, via allosteric rather than competitive inhibition. Functionally, catalyzes the ATP-dependent amination of UTP to CTP with either L-glutamine or ammonia as the source of nitrogen. Regulates intracellular CTP levels through interactions with the four ribonucleotide triphosphates. The protein is CTP synthase of Polynucleobacter asymbioticus (strain DSM 18221 / CIP 109841 / QLW-P1DMWA-1) (Polynucleobacter necessarius subsp. asymbioticus).